The primary structure comprises 98 residues: NADH-ubiquinone oxidoreductase chain 4L (98 aa).

A run of 3 helical transmembrane segments spans residues 1 to 21 (MEQI…GVLT), 28 to 48 (STLL…VLLI), and 61 to 81 (LILL…LVTI).

Belongs to the complex I subunit 4L family. In terms of assembly, core subunit of respiratory chain NADH dehydrogenase (Complex I) which is composed of 45 different subunits.

Its subcellular location is the mitochondrion inner membrane. The catalysed reaction is a ubiquinone + NADH + 5 H(+)(in) = a ubiquinol + NAD(+) + 4 H(+)(out). Core subunit of the mitochondrial membrane respiratory chain NADH dehydrogenase (Complex I) which catalyzes electron transfer from NADH through the respiratory chain, using ubiquinone as an electron acceptor. Part of the enzyme membrane arm which is embedded in the lipid bilayer and involved in proton translocation. In Monodelphis domestica (Gray short-tailed opossum), this protein is NADH-ubiquinone oxidoreductase chain 4L (MT-ND4L).